The following is a 249-amino-acid chain: Phosphate import ATP-binding protein PstB 2 (249 aa).

The 241-residue stretch at 4–244 (FDIENLDLYY…PSDDRTRGYV (241 aa)) folds into the ABC transporter domain. 36 to 43 (GPSGCGKS) contributes to the ATP binding site.

It belongs to the ABC transporter superfamily. Phosphate importer (TC 3.A.1.7) family. The complex is composed of two ATP-binding proteins (PstB), two transmembrane proteins (PstC and PstA) and a solute-binding protein (PstS).

The protein resides in the cell inner membrane. The catalysed reaction is phosphate(out) + ATP + H2O = ADP + 2 phosphate(in) + H(+). In terms of biological role, part of the ABC transporter complex PstSACB involved in phosphate import. Responsible for energy coupling to the transport system. The protein is Phosphate import ATP-binding protein PstB 2 of Vibrio vulnificus (strain CMCP6).